A 1243-amino-acid chain; its full sequence is MGRRRIRSRIRKSHFYTFKCLRPKTLEDQGPHIINGPGYTRIVHCNQPHLHLAKVLRYTSNYVSTTRYNLITFLPKCLYEQFHRVANFYFLVAAILSVFPLSPFNKWSMIAPLIFVVGLSMGKEALEDWRRFMQDVKVNSRKATVHRGDGDFGRRKWKKLRVGDVVKVEKDQFFPADLLLLSSSYEDGICYVETMNLDGETNLKVKRCLDVTLPLERDDTFQSFSGTIKCEDPNPNLYTFVGNLEYDGQVYPLDPSQILLRDSKLRNTSYVYGVVVFTGHDTKVMQNSTKSPSKRSRIEKRMDYIIYTLFALLVLVSFISSLGFAVMTKMHMGDWWYLRPDKPERLTNPRNPFHAWVVHLITAVLLYGYLIPISLYVSIELVKVLQATFINQDLQMYDSESGTPAQARTSNLNEELGQVDTILSDKTGTLTCNQMDFLKCSIAGTSYGVRASEVELAAAKQMAIDLDEEQGEEVTHLPRTRGRMHGYAKMPSKTSSDIELETVITATDEGDQTQSTGIKGFSFEDQRLMGGNWLNEPNSDDILMFLRILAVCHTAIPEVDEDTGKCTYEAESPDEVAFLVAAGEFGFEFTKRTQSSVFISERHSGQPVEREYKVLNVLDFTSKRKRMSVIVRDEKGQILLLCKGADSIIFERLSKNGKNYLEATSKHLNGYGEAGLRTLALSYRKLDETEYSIWNSEFHKAKTSVGADRDEMLEKVSDMMEKELILVGATAVEDKLQKGVPQCIDKLAQAGLKIWVLTGDKMETAINIGYACSLLRQGMKQIYIALRNEEGSSQDPEAAARENILMQIINASQMIKLEKDPHAAFALIIDGKTLTYALEDDIKYQFLALAVDCASVICCRVSPKQKALVTRLAKEGTGKTTLAIGDGANDVGMIQEADIGVGISGVEGMQAVMASDFSIAQFRFLERLLVVHGHWCYKRIAQMICYFFYKNITFGLTLFYFEAFTGFSGQAIYNDSYLLLFNVILTSLPVIALGVFEQDVSSEVCLQFPALYQQGPKNLFFDWYRIIGWMANGVYASVVIFSLNIGIFHVQSFCSGGQTADMDAMGTAMFTCIIWAVNVQIALTMSHFTWIQHVLIWGSIVTWYIFLALFGMLPPKVSGNIFHMLSETLAPAPIFWLTSLLVIAATTLPYLAYISFQRSLNPLDHHIIQEIKHFRIDVQDECMWTRERSKAREKTKIGVTARVDAKIRQLRGRLQRKHSILSVMSGLSGVSASTDTTSTTQHS.

At 1 to 74 the chain is on the cytoplasmic side; the sequence is MGRRRIRSRI…TTRYNLITFL (74 aa). The helical transmembrane segment at 75–96 threads the bilayer; it reads PKCLYEQFHRVANFYFLVAAIL. Topologically, residues 97 to 100 are extracellular; the sequence is SVFP. The chain crosses the membrane as a helical span at residues 101–123; it reads LSPFNKWSMIAPLIFVVGLSMGK. Residues 124-305 are Cytoplasmic-facing; the sequence is EALEDWRRFM…SRIEKRMDYI (182 aa). A helical membrane pass occupies residues 306-327; it reads IYTLFALLVLVSFISSLGFAVM. The Extracellular portion of the chain corresponds to 328–359; the sequence is TKMHMGDWWYLRPDKPERLTNPRNPFHAWVVH. Residues 360-377 traverse the membrane as a helical segment; the sequence is LITAVLLYGYLIPISLYV. Residues 378 to 941 are Cytoplasmic-facing; that stretch reads SIELVKVLQA…HGHWCYKRIA (564 aa). Catalysis depends on Asp425, which acts as the 4-aspartylphosphate intermediate. Lys623 is covalently cross-linked (Glycyl lysine isopeptide (Lys-Gly) (interchain with G-Cter in ubiquitin)). Residues Asp886 and Asp890 each contribute to the Mg(2+) site. The chain crosses the membrane as a helical span at residues 942 to 961; it reads QMICYFFYKNITFGLTLFYF. The Extracellular portion of the chain corresponds to 962-975; the sequence is EAFTGFSGQAIYND. A helical transmembrane segment spans residues 976–995; it reads SYLLLFNVILTSLPVIALGV. Topologically, residues 996–1025 are cytoplasmic; that stretch reads FEQDVSSEVCLQFPALYQQGPKNLFFDWYR. Residues 1026–1048 form a helical membrane-spanning segment; sequence IIGWMANGVYASVVIFSLNIGIF. Topologically, residues 1049-1061 are extracellular; it reads HVQSFCSGGQTAD. The helical transmembrane segment at 1062-1084 threads the bilayer; the sequence is MDAMGTAMFTCIIWAVNVQIALT. At 1085–1090 the chain is on the cytoplasmic side; sequence MSHFTW. A helical membrane pass occupies residues 1091-1111; that stretch reads IQHVLIWGSIVTWYIFLALFG. Topologically, residues 1112 to 1128 are extracellular; sequence MLPPKVSGNIFHMLSET. The chain crosses the membrane as a helical span at residues 1129-1153; the sequence is LAPAPIFWLTSLLVIAATTLPYLAY. Residues 1154–1243 lie on the Cytoplasmic side of the membrane; that stretch reads ISFQRSLNPL…TDTTSTTQHS (90 aa).

This sequence belongs to the cation transport ATPase (P-type) (TC 3.A.3) family. Type IV subfamily.

It is found in the cell membrane. The protein localises to the endomembrane system. The enzyme catalyses ATP + H2O + phospholipidSide 1 = ADP + phosphate + phospholipidSide 2.. Functionally, involved in transport of phospholipids and in regulation of pollen plasma membrane lipid asymmetry. This is Probable phospholipid-transporting ATPase 7 from Arabidopsis thaliana (Mouse-ear cress).